A 605-amino-acid chain; its full sequence is Leucine aminopeptidase (605 aa).

Lysine 374, aspartate 379, and lysine 386 together coordinate a peptide. Positions 374 and 379 each coordinate Zn(2+). Positions 384 to 401 (NLKAAPGSMIDLMKFDMS) are L13 loop. Lysine 386 is an active-site residue. Positions 394, 396, 399, 459, and 461 each coordinate Zn(2+). The a peptide site is built by aspartate 399 and aspartate 459. Arginine 463 is a catalytic residue.

Belongs to the peptidase M17 family. As to quaternary structure, homohexamer composed of dimer of trimers. Both the identity and concentration of metal ions available dictate the extent to which oligomerization occurs; Mn(2+) and Co(2+) induces oligomerization, whereas Mg(2+) has no effect, and Zn(2+) causes irreversible protein aggregation in vitro. Requires Zn(2+) as cofactor.

Its subcellular location is the cytoplasm. The enzyme catalyses Release of an N-terminal amino acid, Xaa-|-Yaa-, in which Xaa is preferably Leu, but may be other amino acids including Pro although not Arg or Lys, and Yaa may be Pro. Amino acid amides and methyl esters are also readily hydrolyzed, but rates on arylamides are exceedingly low.. The catalysed reaction is L-cysteinylglycine + H2O = L-cysteine + glycine. Oligomerization is required for catalytic activity and is metal-dependent. The type of metal that binds the 2 metal binding sites influences catalytic activity and substrate specificity. In vitro, activated by Co(2+), Mn(2+), Ni(2+), Mg(2+) and Zn(2+) with decreasing strength. Occupancy of the site 2 is essential and sufficient for activating the enzyme but occupation of the 2 sites is necessary for full catalytic activity. Inhibited by fungal metabolite bestatin. Inhibited by Phe-Naphthyl (PNAP). In terms of biological role, aminopeptidase which preferentially cleaves leucine residues from the N-terminus of peptides. Also, has some activity towards tryptophan and methionine and to a lesser extent towards phenylalanine. Has very low activity or no activity towards the other amino acids. In addition, cleaves the Cys-Gly dipeptide, probably as part of the glutathione regulation pathway; cleavage only occurs in the presence of Mn(2+). During the asexual blood stage, plays a role in the final step of host hemoglobin catabolism, by cleaving hemoglobin-derived oligopeptides providing a source of amino acids for the parasite protein synthesis and for the maintenance of osmotic homeostasis. During the asexual blood stage, may also play a role during the ring-trophozoite transition. This Plasmodium falciparum (isolate 3D7) protein is Leucine aminopeptidase.